A 141-amino-acid polypeptide reads, in one-letter code: Small ribosomal subunit protein uS12 (141 aa).

Belongs to the universal ribosomal protein uS12 family. As to quaternary structure, part of the 30S ribosomal subunit.

In terms of biological role, with S4 and S5 plays an important role in translational accuracy. Located at the interface of the 30S and 50S subunits. The protein is Small ribosomal subunit protein uS12 of Methanosphaera stadtmanae (strain ATCC 43021 / DSM 3091 / JCM 11832 / MCB-3).